We begin with the raw amino-acid sequence, 420 residues long: D-tagatose-1,6-bisphosphate aldolase subunit GatZ (420 aa).

Belongs to the GatZ/KbaZ family. GatZ subfamily. Forms a complex with GatY.

It participates in carbohydrate metabolism; D-tagatose 6-phosphate degradation; D-glyceraldehyde 3-phosphate and glycerone phosphate from D-tagatose 6-phosphate: step 2/2. Functionally, component of the tagatose-1,6-bisphosphate aldolase GatYZ that is required for full activity and stability of the Y subunit. Could have a chaperone-like function for the proper and stable folding of GatY. When expressed alone, GatZ does not show any aldolase activity. Is involved in the catabolism of galactitol. The protein is D-tagatose-1,6-bisphosphate aldolase subunit GatZ of Escherichia coli O139:H28 (strain E24377A / ETEC).